The primary structure comprises 108 residues: MSDTEYLARAEAVLASVERTVDAANDGDHDIDLERNGSVLTLTFENGSKIIINLQPPMKELWIAAKAGGFHYRFVDGEWRDTRTGTEFFSALTDYATQQAGLPITFRA.

Belongs to the frataxin family.

Its function is as follows. Involved in iron-sulfur (Fe-S) cluster assembly. May act as a regulator of Fe-S biogenesis. This is Iron-sulfur cluster assembly protein CyaY from Burkholderia ambifaria (strain MC40-6).